Here is a 423-residue protein sequence, read N- to C-terminus: Histidine--tRNA ligase (423 aa).

This sequence belongs to the class-II aminoacyl-tRNA synthetase family. In terms of assembly, homodimer.

The protein localises to the cytoplasm. The catalysed reaction is tRNA(His) + L-histidine + ATP = L-histidyl-tRNA(His) + AMP + diphosphate + H(+). The chain is Histidine--tRNA ligase from Shewanella loihica (strain ATCC BAA-1088 / PV-4).